The chain runs to 151 residues: Ribosome maturation factor RimP (151 aa).

The protein belongs to the RimP family.

The protein localises to the cytoplasm. Functionally, required for maturation of 30S ribosomal subunits. This is Ribosome maturation factor RimP from Shewanella sp. (strain MR-4).